The chain runs to 560 residues: Vacuolar protein 8 (560 aa).

Gly-2 carries the N-myristoyl glycine lipid modification. Cys-4 is lipidated: S-palmitoyl cysteine. ARM repeat units lie at residues 39-76 (NRAE…FAEI), 77-116 (TERD…NLAV), 118-157 (TDNK…NLAT), 159-198 (EENK…NMTH), 200-239 (DENR…NIAV), 243-282 (NRRK…NLAS), 284-323 (EKYQ…NISI), 325-365 (PQNE…NLAA), and 409-448 (DELK…NLSS).

It belongs to the beta-catenin family.

The protein resides in the vacuole membrane. Functionally, functions in both vacuole inheritance and protein targeting from the cytoplasm to vacuole. In Chaetomium globosum (strain ATCC 6205 / CBS 148.51 / DSM 1962 / NBRC 6347 / NRRL 1970) (Soil fungus), this protein is Vacuolar protein 8 (VAC8).